We begin with the raw amino-acid sequence, 1162 residues long: Spike glycoprotein (1162 aa).

An N-terminal signal peptide occupies residues 1–18 (MLVTPLLLVTLLCALCSA). Residues 19-1095 (VLYDSSSYVY…LKTYIKWPWY (1077 aa)) lie on the Extracellular side of the membrane. N-linked (GlcNAc...) asparagine; by host glycosylation is found at Asn-51, Asn-77, Asn-103, Asn-144, Asn-163, Asn-178, Asn-212, Asn-237, Asn-247, Asn-264, Asn-276, Asn-306, Asn-425, Asn-447, Asn-513, Asn-530, Asn-579, Asn-591, Asn-669, Asn-676, and Asn-714. The segment at 769–874 (IPFATQLQAR…QVDRLITGRL (106 aa)) is heptad repeat 1 (HR1). A coiled-coil region spans residues 822 to 866 (QDVVSKQSAILTETMASLNKNFGAISSVIQEIYQQFDAIQANAQV). 7 N-linked (GlcNAc...) asparagine; by host glycosylation sites follow: Asn-947, Asn-960, Asn-979, Asn-1014, Asn-1038, Asn-1051, and Asn-1074. Residues 1024-1105 (NDDFDFNDEL…VWLAIAFATI (82 aa)) form a heptad repeat 2 (HR2) region. The stretch at 1055-1083 (PILDIDSEIDRIQGVIQGLNDSLIDLEKL) forms a coiled coil. Residues 1096 to 1116 (VWLAIAFATIIFILILGWVFF) form a helical membrane-spanning segment. Residues 1117–1162 (MTGCCGCCCGCFGIMPLMSKCGKKSSYYTTFDNDVVTEQYRPKKSV) are Cytoplasmic-facing. The Di-lysine motif signature appears at 1159–1162 (KKSV).

It belongs to the gammacoronaviruses spike protein family. Homotrimer; each monomer consists of a S1 and a S2 subunit. The resulting peplomers protrude from the virus surface as spikes. Post-translationally, specific enzymatic cleavages in vivo yield mature proteins. The precursor is processed into S1 and S2 by host cell furin or furin-like protease to yield the mature S1 and S2 proteins. The cleavage site between S1 and S2 requires the optimal sequence [KR]-X-[KR]-R. Additionally, a second cleavage leads to the release of a fusion peptide after viral attachment to host cell receptor.

It localises to the virion membrane. It is found in the host endoplasmic reticulum-Golgi intermediate compartment membrane. In terms of biological role, attaches the virion to the host cell membrane by interacting with sialic acids, initiating the infection. Mediates fusion of the virion and cellular membranes by acting as a class I viral fusion protein. Under the current model, the protein has at least 3 conformational states: pre-fusion native state, pre-hairpin intermediate state, and post-fusion hairpin state. During viral and target cell membrane fusion, the coiled coil regions (heptad repeats) assume a trimer-of-hairpins structure, positioning the fusion peptide in close proximity to the C-terminal region of the ectodomain. The formation of this structure appears to drive apposition and subsequent fusion of viral and target cell membranes. Its function is as follows. Acts as a viral fusion peptide after S2 cleavage occurring upon virus endocytosis. The sequence is that of Spike glycoprotein from Avian infectious bronchitis virus (strain Beaudette) (IBV).